A 197-amino-acid chain; its full sequence is Ribonuclease HII (197 aa).

The region spanning 11–197 (HLIAGVDEVG…FAPVKKILGL (187 aa)) is the RNase H type-2 domain. 3 residues coordinate a divalent metal cation: Asp17, Glu18, and Asp109.

This sequence belongs to the RNase HII family. Mn(2+) serves as cofactor. Requires Mg(2+) as cofactor.

The protein localises to the cytoplasm. The catalysed reaction is Endonucleolytic cleavage to 5'-phosphomonoester.. Functionally, endonuclease that specifically degrades the RNA of RNA-DNA hybrids. The polypeptide is Ribonuclease HII (Actinobacillus pleuropneumoniae serotype 5b (strain L20)).